The primary structure comprises 183 residues: Small ribosomal subunit protein uS4c (183 aa).

The region spanning 82–143 is the S4 RNA-binding domain; it reads MRLDNILFRL…KQRSKALIQN (62 aa).

It belongs to the universal ribosomal protein uS4 family. As to quaternary structure, part of the 30S ribosomal subunit. Contacts protein S5. The interaction surface between S4 and S5 is involved in control of translational fidelity.

The protein localises to the plastid. It localises to the chloroplast. One of the primary rRNA binding proteins, it binds directly to 16S rRNA where it nucleates assembly of the body of the 30S subunit. In terms of biological role, with S5 and S12 plays an important role in translational accuracy. The polypeptide is Small ribosomal subunit protein uS4c (rps4) (Sparaxis sp. (strain Lejeune 1997)).